A 344-amino-acid chain; its full sequence is Uroporphyrinogen decarboxylase (344 aa).

Residues 26 to 30, Asp75, Tyr150, Ser205, and His323 each bind substrate; that span reads RQAGR.

Belongs to the uroporphyrinogen decarboxylase family. Homodimer.

It localises to the cytoplasm. It carries out the reaction uroporphyrinogen III + 4 H(+) = coproporphyrinogen III + 4 CO2. It participates in porphyrin-containing compound metabolism; protoporphyrin-IX biosynthesis; coproporphyrinogen-III from 5-aminolevulinate: step 4/4. Its function is as follows. Catalyzes the decarboxylation of four acetate groups of uroporphyrinogen-III to yield coproporphyrinogen-III. The polypeptide is Uroporphyrinogen decarboxylase (Corynebacterium diphtheriae (strain ATCC 700971 / NCTC 13129 / Biotype gravis)).